The sequence spans 890 residues: Bacteriocin BCN5 (890 aa).

SH3b domains lie at 22–84 and 179–241; these read PPNA…TNAT and ENNA…TNAT. One can recognise a Peptidase M14 domain in the interval 303 to 549; the sequence is GYVKYEGAAA…RYLQKIINAV (247 aa). 3 residues coordinate Zn(2+): H358, E361, and H475. E525 functions as the Proton donor/acceptor in the catalytic mechanism. The SH3b 3 domain maps to 572–636; that stretch reads EATGEVINVQ…VNSGYIIILK (65 aa). The segment at 815–869 is hydrophobic; sequence KALAAAVIVNGVETMFCAFLGGFIAQCIAPEFPIVAAVAGAIVSAIAAFAIGYFV.

The cofactor is Zn(2+).

Functionally, may function as an ionophore. This is Bacteriocin BCN5 (bcn) from Clostridium perfringens.